A 384-amino-acid polypeptide reads, in one-letter code: 4-coumarate--CoA ligase (384 aa).

Belongs to the ATP-dependent AMP-binding enzyme family.

The enzyme catalyses (E)-4-coumarate + ATP + CoA = (E)-4-coumaroyl-CoA + AMP + diphosphate. Functionally, converts p-coumaric acid into p-coumaryl CoA. This is necessary for the activation of the photoactive yellow protein (PYP) chromophore. This chain is 4-coumarate--CoA ligase (pcl), found in Rhodobacter capsulatus (strain ATCC BAA-309 / NBRC 16581 / SB1003).